A 130-amino-acid chain; its full sequence is Fluoride-specific ion channel FluC 2 (130 aa).

The next 4 helical transmembrane spans lie at 4–24 (GLST…GAIC), 38–58 (NLWG…FFLA), 72–92 (LYLL…SLIL), and 103–123 (WMEL…FISL). Residues G82 and S85 each coordinate Na(+).

This sequence belongs to the fluoride channel Fluc/FEX (TC 1.A.43) family.

It localises to the cell inner membrane. The catalysed reaction is fluoride(in) = fluoride(out). Its activity is regulated as follows. Na(+) is not transported, but it plays an essential structural role and its presence is essential for fluoride channel function. Fluoride-specific ion channel. Important for reducing fluoride concentration in the cell, thus reducing its toxicity. This is Fluoride-specific ion channel FluC 2 from Prochlorococcus marinus (strain SARG / CCMP1375 / SS120).